Here is a 554-residue protein sequence, read N- to C-terminus: MTPLIFVTGGVVSSLGKGIAAASLASILEARGLKVTMMKLDPYINVDPGTMSPFQHGEVYVTDDGAETDLDLGHYERYVRTRLSRKNSVTTGRIYENVIRKERRGDYLGATVQVIPHITDEIRRCIDEATAGFDVALIEIGGTVGDIESLPFLEAIRQVRTERGAEKAMFMHLTLVPYIAAAGELKTKPTQHSVKELRSIGIQPDVLLCRSEQAVPDSERRKIALFTNVSERAVISCPDIDVLYGMPLELRRQGLDELVIDQFKLRDKVATADLSEWEAVVDAVKHPLDEVTIAVVGKYVDHQDAYKSVAEALKHGGLRQRTKVNLTWLEAQDLEGSDMAALQGIDGILVPGGFGDRGFEGKVQTSKYAREHKVPYFGICYGMQAAVVDYARHVADLDAANSTENDRQSPHPVIGLITEWRTATGEVEKRDEKSDLGGTMRLGLQEQRLKPGTLAREVYGKDVVAERHRHRYEFNNRYRTQLEDAGLVISGKSMDDTLVEMVELPRDTHPWFLACQAHPEFLSTPRDGHPLFIGFVRAAREKKAGGKLLKEARA.

The tract at residues 1-265 is amidoligase domain; sequence MTPLIFVTGG…DELVIDQFKL (265 aa). Ser13 is a CTP binding site. Ser13 contributes to the UTP binding site. Residues 14–19 and Asp71 each bind ATP; that span reads SLGKGI. Positions 71 and 139 each coordinate Mg(2+). CTP is bound by residues 146–148, 186–191, and Lys222; these read DIE and KTKPTQ. UTP is bound by residues 186 to 191 and Lys222; that span reads KTKPTQ. The region spanning 292 to 545 is the Glutamine amidotransferase type-1 domain; sequence TIAVVGKYVD…VRAAREKKAG (254 aa). Gly353 lines the L-glutamine pocket. The active-site Nucleophile; for glutamine hydrolysis is Cys380. L-glutamine is bound by residues 381–384, Glu404, and Arg471; that span reads YGMQ. Catalysis depends on residues His518 and Glu520.

The protein belongs to the CTP synthase family. Homotetramer.

It carries out the reaction UTP + L-glutamine + ATP + H2O = CTP + L-glutamate + ADP + phosphate + 2 H(+). The catalysed reaction is L-glutamine + H2O = L-glutamate + NH4(+). It catalyses the reaction UTP + NH4(+) + ATP = CTP + ADP + phosphate + 2 H(+). It participates in pyrimidine metabolism; CTP biosynthesis via de novo pathway; CTP from UDP: step 2/2. Its activity is regulated as follows. Allosterically activated by GTP, when glutamine is the substrate; GTP has no effect on the reaction when ammonia is the substrate. The allosteric effector GTP functions by stabilizing the protein conformation that binds the tetrahedral intermediate(s) formed during glutamine hydrolysis. Inhibited by the product CTP, via allosteric rather than competitive inhibition. In terms of biological role, catalyzes the ATP-dependent amination of UTP to CTP with either L-glutamine or ammonia as the source of nitrogen. Regulates intracellular CTP levels through interactions with the four ribonucleotide triphosphates. This is CTP synthase from Xanthomonas campestris pv. campestris (strain B100).